Reading from the N-terminus, the 359-residue chain is Alanine racemase, biosynthetic (359 aa).

K34 acts as the Proton acceptor; specific for D-alanine in catalysis. K34 is subject to N6-(pyridoxal phosphate)lysine. R129 contributes to the substrate binding site. The Proton acceptor; specific for L-alanine role is filled by Y255. A substrate-binding site is contributed by M303.

Belongs to the alanine racemase family. It depends on pyridoxal 5'-phosphate as a cofactor.

The catalysed reaction is L-alanine = D-alanine. It participates in amino-acid biosynthesis; D-alanine biosynthesis; D-alanine from L-alanine: step 1/1. It functions in the pathway cell wall biogenesis; peptidoglycan biosynthesis. Its function is as follows. Catalyzes the interconversion of L-alanine and D-alanine. Provides the D-alanine required for cell wall biosynthesis. The polypeptide is Alanine racemase, biosynthetic (alr) (Salmonella typhi).